A 220-amino-acid chain; its full sequence is Glutathione S-transferase-like protein FUS3 (220 aa).

The GST N-terminal domain occupies serine 3–serine 84. In terms of domain architecture, GST C-terminal spans aspartate 90 to lysine 220.

The protein belongs to the GST superfamily.

Glutathione S-transferase-like protein; part of the gene cluster that mediates the biosynthesis of the mycotoxin fusarin C. Within the cluster, FUS1, FUS2, FUS8 and FUS9 are sufficient for fusarin production. The other FUS cluster members are not essential for fusarin C biosynthesis. This Gibberella moniliformis (strain M3125 / FGSC 7600) (Maize ear and stalk rot fungus) protein is Glutathione S-transferase-like protein FUS3.